The sequence spans 417 residues: NADH-quinone oxidoreductase subunit D (417 aa).

Belongs to the complex I 49 kDa subunit family. In terms of assembly, NDH-1 is composed of 14 different subunits. Subunits NuoB, C, D, E, F, and G constitute the peripheral sector of the complex.

It localises to the cell inner membrane. The enzyme catalyses a quinone + NADH + 5 H(+)(in) = a quinol + NAD(+) + 4 H(+)(out). NDH-1 shuttles electrons from NADH, via FMN and iron-sulfur (Fe-S) centers, to quinones in the respiratory chain. The immediate electron acceptor for the enzyme in this species is believed to be ubiquinone. Couples the redox reaction to proton translocation (for every two electrons transferred, four hydrogen ions are translocated across the cytoplasmic membrane), and thus conserves the redox energy in a proton gradient. The chain is NADH-quinone oxidoreductase subunit D from Paraburkholderia phytofirmans (strain DSM 17436 / LMG 22146 / PsJN) (Burkholderia phytofirmans).